Reading from the N-terminus, the 149-residue chain is Aquaporin-like protein 2 (149 aa).

The disordered stretch occupies residues 1-35; the sequence is MSNESNDLEKNISHLDPTGVDNAYIPPEQPETKHS. The Cytoplasmic segment spans residues 1 to 47; that stretch reads MSNESNDLEKNISHLDPTGVDNAYIPPEQPETKHSRFNIDRDTLRNH. Residues 48–68 traverse the membrane as a helical segment; that stretch reads FIAAVGEFCGTFMFLWCAYVI. Over 69 to 89 the chain is Extracellular; that stretch reads CNVANHDVALTTEPEGSHPGQ. A helical membrane pass occupies residues 90–110; it reads LIMIALGFGFSVMFSIWCFWW. Topologically, residues 111 to 149 are cytoplasmic; it reads GFEPSRFSLFVFGQSHLSSQMCSDVVSSDHCWDGCWWCR.

The protein belongs to the MIP/aquaporin (TC 1.A.8) family.

The protein resides in the endoplasmic reticulum membrane. The protein localises to the cell membrane. In terms of biological role, water channel required to facilitate the transport of water across membranes. Involved in freeze tolerance, osmotolerance and cell flocculation in liquid cultures. Is non-functional in most laboratory strains. The protein is Aquaporin-like protein 2 (AQY2-2) of Saccharomyces cerevisiae (strain RM11-1a) (Baker's yeast).